Consider the following 272-residue polypeptide: 2-succinyl-6-hydroxy-2,4-cyclohexadiene-1-carboxylate synthase (272 aa).

This sequence belongs to the AB hydrolase superfamily. MenH family. As to quaternary structure, monomer.

It catalyses the reaction 5-enolpyruvoyl-6-hydroxy-2-succinyl-cyclohex-3-ene-1-carboxylate = (1R,6R)-6-hydroxy-2-succinyl-cyclohexa-2,4-diene-1-carboxylate + pyruvate. It participates in quinol/quinone metabolism; 1,4-dihydroxy-2-naphthoate biosynthesis; 1,4-dihydroxy-2-naphthoate from chorismate: step 3/7. It functions in the pathway quinol/quinone metabolism; menaquinone biosynthesis. Its function is as follows. Catalyzes a proton abstraction reaction that results in 2,5-elimination of pyruvate from 2-succinyl-5-enolpyruvyl-6-hydroxy-3-cyclohexene-1-carboxylate (SEPHCHC) and the formation of 2-succinyl-6-hydroxy-2,4-cyclohexadiene-1-carboxylate (SHCHC). The protein is 2-succinyl-6-hydroxy-2,4-cyclohexadiene-1-carboxylate synthase of Yersinia pestis bv. Antiqua (strain Nepal516).